The chain runs to 464 residues: Armadillo repeat-containing protein 6 homolog (464 aa).

T9 carries the phosphothreonine modification. ARM repeat units lie at residues 235 to 275 (AHEH…TLAV), 287 to 331 (GGLK…QQGV), 332 to 374 (APII…FDTG), and 375 to 418 (IAEV…ISFG).

It belongs to the ARMC6 family.

In Drosophila melanogaster (Fruit fly), this protein is Armadillo repeat-containing protein 6 homolog.